The primary structure comprises 478 residues: MKVLFASSECAPFFKTGGLGDVAGALPKELAKKSEIDSVAVILPYFKNEMKEEYRSLLKDEFYDFVDVGWRHEYVGVKSLEKEGVKYYFLDNEHYFGRGQLYGYGDDGERFAFFDLALCQLLEKLDFIPDVLHVNDWQTAMVPFLLKEKYNWIKAYEKIKTVLTIHNIEFQGLMHGDALSELFGMGMERYFEGVVRHNGMLNMLKTGILYADRVNTVSPTYAKEIQTSEFGCGLESILQYVDGKVSGILNGIDYDIYNPENDILIPYHFSEEELSGKGQMKAELQKRTGLPLNPNVPLIGMVSRLTNQKGFDLVLSQLEKVLEENVQIVLLGTGFPEIEEGFRYFSQKYPDKLSANIAFDIQFAQEIYAGSDFFLMPSAFEPCGLSQMIAMRYGTLPIVHEIGGLKDTVIPFNPISKEGTGFGFVDFEGQILVETINRALEVYGKEPEVLNKMVLSAMSKDFSWGTKAQQYIELYQEL.

Lysine 15 is a binding site for ADP-alpha-D-glucose.

It belongs to the glycosyltransferase 1 family. Bacterial/plant glycogen synthase subfamily.

It carries out the reaction [(1-&gt;4)-alpha-D-glucosyl](n) + ADP-alpha-D-glucose = [(1-&gt;4)-alpha-D-glucosyl](n+1) + ADP + H(+). It participates in glycan biosynthesis; glycogen biosynthesis. Its function is as follows. Synthesizes alpha-1,4-glucan chains using ADP-glucose. The polypeptide is Glycogen synthase (Lactococcus lactis subsp. lactis (strain IL1403) (Streptococcus lactis)).